The following is a 97-amino-acid chain: Co-chaperonin GroES (97 aa).

It belongs to the GroES chaperonin family. As to quaternary structure, heptamer of 7 subunits arranged in a ring. Interacts with the chaperonin GroEL.

The protein resides in the cytoplasm. Its function is as follows. Together with the chaperonin GroEL, plays an essential role in assisting protein folding. The GroEL-GroES system forms a nano-cage that allows encapsulation of the non-native substrate proteins and provides a physical environment optimized to promote and accelerate protein folding. GroES binds to the apical surface of the GroEL ring, thereby capping the opening of the GroEL channel. This chain is Co-chaperonin GroES, found in Pseudomonas putida (strain GB-1).